The sequence spans 266 residues: Glucosamine-6-phosphate deaminase (266 aa).

The active-site Proton acceptor; for enolization step is the D72. The active-site For ring-opening step is D141. The Proton acceptor; for ring-opening step role is filled by H143. E148 functions as the For ring-opening step in the catalytic mechanism.

This sequence belongs to the glucosamine/galactosamine-6-phosphate isomerase family. NagB subfamily. As to quaternary structure, homohexamer.

It carries out the reaction alpha-D-glucosamine 6-phosphate + H2O = beta-D-fructose 6-phosphate + NH4(+). It participates in amino-sugar metabolism; N-acetylneuraminate degradation; D-fructose 6-phosphate from N-acetylneuraminate: step 5/5. Its activity is regulated as follows. Allosterically activated by N-acetylglucosamine 6-phosphate (GlcNAc6P). Functionally, catalyzes the reversible isomerization-deamination of glucosamine 6-phosphate (GlcN6P) to form fructose 6-phosphate (Fru6P) and ammonium ion. This chain is Glucosamine-6-phosphate deaminase, found in Vibrio vulnificus (strain CMCP6).